A 392-amino-acid polypeptide reads, in one-letter code: Phospho-N-acetylmuramoyl-pentapeptide-transferase (392 aa).

Helical transmembrane passes span 24–44, 76–96, 100–120, 137–157, 170–190, 193–213, 225–245, 262–282, 289–309, 314–334, and 369–389; these read YLTMRAVMAALTALVIGLLAG, TMGGALILLSIAVSTLLWFDL, FVWIVLLVTLGFGTIGWVDDW, YFWQSVIGLLAALYLVFCISE, WVQSGFALDLPPKAGLLVPFF, VSYPLGVLGFVIMTYLVIVGA, GLAIMPVIMVGSALGIFAYVT, SGELLVYCAAMAGAGLAFLWF, VFMGDVGALALGASLGTIAVI, IVLAIMGGIFVVEALSVMLQV, and QVVIRFWIITMLLCLLGLSTL.

Belongs to the glycosyltransferase 4 family. MraY subfamily. The cofactor is Mg(2+).

Its subcellular location is the cell inner membrane. The enzyme catalyses UDP-N-acetyl-alpha-D-muramoyl-L-alanyl-gamma-D-glutamyl-meso-2,6-diaminopimeloyl-D-alanyl-D-alanine + di-trans,octa-cis-undecaprenyl phosphate = di-trans,octa-cis-undecaprenyl diphospho-N-acetyl-alpha-D-muramoyl-L-alanyl-D-glutamyl-meso-2,6-diaminopimeloyl-D-alanyl-D-alanine + UMP. It participates in cell wall biogenesis; peptidoglycan biosynthesis. Functionally, catalyzes the initial step of the lipid cycle reactions in the biosynthesis of the cell wall peptidoglycan: transfers peptidoglycan precursor phospho-MurNAc-pentapeptide from UDP-MurNAc-pentapeptide onto the lipid carrier undecaprenyl phosphate, yielding undecaprenyl-pyrophosphoryl-MurNAc-pentapeptide, known as lipid I. This is Phospho-N-acetylmuramoyl-pentapeptide-transferase from Delftia acidovorans (strain DSM 14801 / SPH-1).